A 538-amino-acid chain; its full sequence is ATP synthase subunit beta, mitochondrial (538 aa).

215–222 (GGAGVGKT) is a binding site for ATP.

Belongs to the ATPase alpha/beta chains family. Subunit of the F-type ATPase which has 2 components, CF(1) - the catalytic core - and CF(0) - the membrane proton channel. Interacts (via N-terminus) with lov-1 (via PLAT domain). Expressed in three categories of adult male sensory neurons: tail ray B neurons, HOB hook neuron and head cephalic (CEM) neurons.

It is found in the cell projection. The protein resides in the cilium. It localises to the mitochondrion. Its subcellular location is the mitochondrion inner membrane. It carries out the reaction ATP + H2O + 4 H(+)(in) = ADP + phosphate + 5 H(+)(out). Its function is as follows. Mitochondrial membrane ATP synthase (F(1)F(0) ATP synthase or Complex V) produces ATP from ADP in the presence of a proton gradient across the membrane which is generated by electron transport complexes of the respiratory chain. F-type ATPases consist of two structural domains, F(1) - containing the extramembraneous catalytic core, and F(0) - containing the membrane proton channel, linked together by a central stalk and a peripheral stalk. During catalysis, ATP synthesis in the catalytic domain of F(1) is coupled via a rotary mechanism of the central stalk subunits to proton translocation. Subunits alpha and beta form the catalytic core in F(1). Rotation of the central stalk against the surrounding subunits leads to hydrolysis of ATP in three separate catalytic sites on the beta subunits. Required during male mating behavior for the response to hermaphrodite contact, acting with lov-1 and pkd-2. May be involved in polycystin signaling. The chain is ATP synthase subunit beta, mitochondrial from Caenorhabditis elegans.